Consider the following 209-residue polypeptide: tRNA (guanine-N(7)-)-methyltransferase (209 aa).

The S-adenosyl-L-methionine site is built by Asp-35, Glu-60, Asn-87, and Asp-113. Asp-113 is an active-site residue. 2 residues coordinate substrate: Lys-117 and Asp-149.

Belongs to the class I-like SAM-binding methyltransferase superfamily. TrmB family.

The enzyme catalyses guanosine(46) in tRNA + S-adenosyl-L-methionine = N(7)-methylguanosine(46) in tRNA + S-adenosyl-L-homocysteine. The protein operates within tRNA modification; N(7)-methylguanine-tRNA biosynthesis. Catalyzes the formation of N(7)-methylguanine at position 46 (m7G46) in tRNA. This chain is tRNA (guanine-N(7)-)-methyltransferase, found in Prochlorococcus marinus subsp. pastoris (strain CCMP1986 / NIES-2087 / MED4).